The following is a 472-amino-acid chain: Nuclear receptor subfamily 0 group B member 1 (472 aa).

3 tandem repeats follow at residues 1–67 (MAGE…YRCC), 68–135 (FCGE…YRCC), and 136–202 (FCGE…YRSY). Residues 1-255 (MAGEDHPWQG…RLITLKDPQV (255 aa)) form a 4 X 67 AA tandem repeats region. Short sequence motifs (LXXLL motif) lie at residues 13-17 (LYNLL), 80-84 (LYSML), and 148-152 (LYSLL). Residues 190–471 (QSTQAMAFLY…DMMLEMLCAK (282 aa)) form the NR LBD domain. A 4; truncated repeat occupies 203 to 255 (VCGEEQPQQISVASGTPVSADQTPATPQEQPRAPWWDASPGVQRLITLKDPQV). Polar residues predominate over residues 214–231 (VASGTPVSADQTPATPQE). Disordered regions lie at residues 214–238 (VASG…APWW) and 324–343 (TTRR…ATEQ). Positions 463–468 (MMLEML) match the AF-2 motif motif.

It belongs to the nuclear hormone receptor family. NR0 subfamily. In terms of assembly, homodimer. Interacts with NR5A1, NR5A2, NR0B2 and with COPS2. Interacts with ESRRB; represses ESRRB activity at the GATA6 promoter. Expressed in adult cerebral cortex, spinal cord, thymus, heart, lung, ovary, testis, adrenal gland, hypothalamus, spleen and kidney.

The protein localises to the nucleus. It localises to the cytoplasm. In terms of biological role, nuclear receptor that lacks a DNA-binding domain and acts as a corepressor that inhibits the transcriptional activity of other nuclear receptors through heterodimeric interactions. Component of a cascade required for the development of the hypothalamic-pituitary-adrenal-gonadal axis. May also have a role in the development of the embryo and in the maintenance of embryonic stem cell pluripotency. This Mus musculus (Mouse) protein is Nuclear receptor subfamily 0 group B member 1 (Nr0b1).